Consider the following 374-residue polypeptide: Envelope glycoprotein M (374 aa).

The Intravirion portion of the chain corresponds to 1–16; it reads MKSSKKDIFILHIWLK. Residues 17–37 form a helical membrane-spanning segment; that stretch reads LMGCYVFMFITSVVLPIAAMF. At 38–82 the chain is on the virion surface side; it reads PNLGFPCYYNTLVDYSKLNLREKNQAQHLTPTLFLEAPEMFFYVT. The helical transmembrane segment at 83 to 103 threads the bilayer; it reads YSFIVDCCSLVYYALAAVAVV. Residues 104–117 are Intravirion-facing; sequence KAKKHAPGLMALSQ. The chain crosses the membrane as a helical span at residues 118 to 138; that stretch reads WIMAVGSPTLLYMAVLKLWTI. Residues 139–149 lie on the Virion surface side of the membrane; it reads QLYIHTLSYKH. Residues 150 to 170 form a helical membrane-spanning segment; sequence IYLAAFVYCLHWLLSMVYTEC. At 171–207 the chain is on the intravirion side; the sequence is YITNVSSQWTSSELKKTIPENILLYRVVHVLKPIMMN. Residues 208–228 form a helical membrane-spanning segment; the sequence is VHLSVVALETLIFCLSFMMAI. Residues 229 to 238 are Virion surface-facing; sequence GNSFYVMVSD. A helical transmembrane segment spans residues 239 to 259; sequence IVFGAINLYLILPIIWYFVTE. Topologically, residues 260–269 are intravirion; it reads FWLSKYLPRQ. The chain crosses the membrane as a helical span at residues 270–290; it reads FGFYFGVLVASIILILPVVRY. Residues 291–301 lie on the Virion surface side of the membrane; that stretch reads DKIFVAAQIHR. Residues 302–322 form a helical membrane-spanning segment; it reads AVSINIAMIPLCALVALLVRA. The Intravirion portion of the chain corresponds to 323-374; sequence CRVYTDRKKIAYTALPSKPQTIKYTKPIEPSTKQAPDSSIFLEEESDTDFEQ. The tract at residues 345–374 is disordered; that stretch reads KYTKPIEPSTKQAPDSSIFLEEESDTDFEQ. Acidic residues predominate over residues 364-374; that stretch reads LEEESDTDFEQ.

Belongs to the herpesviridae glycoprotein M family. Interacts (via N-terminus) with gN (via N-terminus). The gM-gN heterodimer forms the gCII complex.

The protein resides in the virion membrane. Its subcellular location is the host Golgi apparatus. It is found in the host trans-Golgi network. The protein localises to the host endosome membrane. It localises to the host nucleus inner membrane. Envelope glycoprotein important for virion assembly and egress. Plays a role in the correct incorporation of gH-gL into virion membrane. Directs the glycoprotein N (gN) to the host trans-Golgi network. This is Envelope glycoprotein M from Connochaetes taurinus (Blue wildebeest).